Reading from the N-terminus, the 225-residue chain is MAADLAAMRVDYGGVPSGSGEDVDLDEAWLAGGWEPLLRNWIEQATAVDIAEPNAMVLATVAVVDGVPRPASRTVLCKGLSPEGVTFYTNYDSAKGTQLAAVPYAAATFVWPVLGRQVHLRGPVERTSAEQTAVYWRSRPRDSQLGAWASQQSRPIDSRAALDRALAEVTARFAGVDEIPVPPHWGGYLLRPEQVEFWQGRRGRLHNRLLVRVAGERMTVERLQP.

Residues 9-12 (RVDY) and Lys-78 each bind substrate. Residues 73-78 (RTVLCK), 88-89 (YT), Lys-95, and Gln-117 each bind FMN. Tyr-135, Arg-139, and Ser-143 together coordinate substrate. FMN contacts are provided by residues 152–153 (QS) and Trp-198. A substrate-binding site is contributed by 204–206 (RLH). An FMN-binding site is contributed by Arg-208.

This sequence belongs to the pyridoxamine 5'-phosphate oxidase family. As to quaternary structure, homodimer. It depends on FMN as a cofactor.

It carries out the reaction pyridoxamine 5'-phosphate + O2 + H2O = pyridoxal 5'-phosphate + H2O2 + NH4(+). It catalyses the reaction pyridoxine 5'-phosphate + O2 = pyridoxal 5'-phosphate + H2O2. It participates in cofactor metabolism; pyridoxal 5'-phosphate salvage; pyridoxal 5'-phosphate from pyridoxamine 5'-phosphate: step 1/1. Its pathway is cofactor metabolism; pyridoxal 5'-phosphate salvage; pyridoxal 5'-phosphate from pyridoxine 5'-phosphate: step 1/1. Functionally, catalyzes the oxidation of either pyridoxine 5'-phosphate (PNP) or pyridoxamine 5'-phosphate (PMP) into pyridoxal 5'-phosphate (PLP). The chain is Pyridoxine/pyridoxamine 5'-phosphate oxidase from Nocardia farcinica (strain IFM 10152).